Reading from the N-terminus, the 260-residue chain is Coiled-coil domain-containing protein 127 (260 aa).

A coiled-coil region spans residues 49–135; that stretch reads QKEVEKEREA…QVMQEKRQVQ (87 aa).

This is Coiled-coil domain-containing protein 127 (CCDC127) from Homo sapiens (Human).